We begin with the raw amino-acid sequence, 499 residues long: Endoglucanase 3 (499 aa).

Positions 1-19 (MALLRCLFLLAVLLPHRNA) are cleaved as a signal peptide. D88 acts as the Nucleophile in catalysis. Active-site residues include H416, D467, and E476.

Belongs to the glycosyl hydrolase 9 (cellulase E) family. In terms of tissue distribution, expressed in flowers.

The protein resides in the secreted. The enzyme catalyses Endohydrolysis of (1-&gt;4)-beta-D-glucosidic linkages in cellulose, lichenin and cereal beta-D-glucans.. This chain is Endoglucanase 3 (GLU8), found in Oryza sativa subsp. japonica (Rice).